A 144-amino-acid chain; its full sequence is Large ribosomal subunit protein uL15 (144 aa).

Residues Met-1 to Gly-52 are disordered. 2 stretches are compositionally biased toward basic residues: residues Lys-11–Arg-21 and Thr-30–Arg-47.

It belongs to the universal ribosomal protein uL15 family. In terms of assembly, part of the 50S ribosomal subunit.

Its function is as follows. Binds to the 23S rRNA. In Wigglesworthia glossinidia brevipalpis, this protein is Large ribosomal subunit protein uL15.